We begin with the raw amino-acid sequence, 314 residues long: Acetaldehyde dehydrogenase (314 aa).

14 to 17 (SGNI) contacts NAD(+). C132 functions as the Acyl-thioester intermediate in the catalytic mechanism. Residues 163-171 (SAGPGTRAN) and N291 contribute to the NAD(+) site.

It belongs to the acetaldehyde dehydrogenase family.

It catalyses the reaction acetaldehyde + NAD(+) + CoA = acetyl-CoA + NADH + H(+). The sequence is that of Acetaldehyde dehydrogenase from Polaromonas sp. (strain JS666 / ATCC BAA-500).